The chain runs to 329 residues: GTPase Obg (329 aa).

The 159-residue stretch at 1-159 (MQFIDQAIID…WSLQLELKLL (159 aa)) folds into the Obg domain. Positions 160–328 (AEVGIIGLPN…LLSSIWYELG (169 aa)) constitute an OBG-type G domain. Residues 166–173 (GLPNAGKS), 191–195 (FTTLI), 213–216 (DIPG), 280–283 (NKKE), and 309–311 (SAV) contribute to the ATP site. Residues Ser173 and Thr193 each contribute to the Mg(2+) site.

Belongs to the TRAFAC class OBG-HflX-like GTPase superfamily. OBG GTPase family. Monomer. Requires Mg(2+) as cofactor.

The protein resides in the cytoplasm. An essential GTPase which binds GTP, GDP and possibly (p)ppGpp with moderate affinity, with high nucleotide exchange rates and a fairly low GTP hydrolysis rate. Plays a role in control of the cell cycle, stress response, ribosome biogenesis and in those bacteria that undergo differentiation, in morphogenesis control. The polypeptide is GTPase Obg (Prochlorococcus marinus (strain NATL1A)).